The following is a 499-amino-acid chain: Serine carboxypeptidase 1 (499 aa).

The first 30 residues, 1–30, serve as a signal peptide directing secretion; the sequence is MARCRRRSGCTAGAALLLLLALALSGGGGA. 3 cysteine pairs are disulfide-bonded: cysteine 92–cysteine 388, cysteine 256–cysteine 268, and cysteine 291–cysteine 355. A glycan (N-linked (GlcNAc...) asparagine) is linked at asparagine 148. Serine 188 is an active-site residue. An N-linked (GlcNAc...) asparagine glycan is attached at asparagine 262. The propeptide at 297 to 351 is linker peptide; it reads IKEVNLQNSKLPQSFKDLGTTNKPFPVRTRMLGRAWPLRAPVKAGRVPSWQEVAS. The N-linked (GlcNAc...) asparagine glycan is linked to asparagine 407. Residues aspartate 423 and histidine 476 contribute to the active site. The Microbody targeting signal signature appears at 497–499; it reads SKL.

Belongs to the peptidase S10 family. Carboxypeptidase I is a dimer, where each monomer is composed of two chains linked by disulfide bonds. In terms of processing, the linker peptide is endoproteolytically excised during enzyme maturation.

Its subcellular location is the secreted. The enzyme catalyses Release of a C-terminal amino acid with broad specificity.. Its function is as follows. May be involved in the degradation of small peptides (2-5 residues) or in the degradation of storage proteins in the embryo. The protein is Serine carboxypeptidase 1 (CBP1) of Hordeum vulgare (Barley).